We begin with the raw amino-acid sequence, 248 residues long: 1-(5-phosphoribosyl)-5-[(5-phosphoribosylamino)methylideneamino] imidazole-4-carboxamide isomerase (248 aa).

D8 serves as the catalytic Proton acceptor. D131 serves as the catalytic Proton donor.

This sequence belongs to the HisA/HisF family.

Its subcellular location is the cytoplasm. The enzyme catalyses 1-(5-phospho-beta-D-ribosyl)-5-[(5-phospho-beta-D-ribosylamino)methylideneamino]imidazole-4-carboxamide = 5-[(5-phospho-1-deoxy-D-ribulos-1-ylimino)methylamino]-1-(5-phospho-beta-D-ribosyl)imidazole-4-carboxamide. The protein operates within amino-acid biosynthesis; L-histidine biosynthesis; L-histidine from 5-phospho-alpha-D-ribose 1-diphosphate: step 4/9. The polypeptide is 1-(5-phosphoribosyl)-5-[(5-phosphoribosylamino)methylideneamino] imidazole-4-carboxamide isomerase (Paracidovorax citrulli (strain AAC00-1) (Acidovorax citrulli)).